The following is a 241-amino-acid chain: Small ribosomal subunit protein uS3 (241 aa).

In terms of domain architecture, KH type-2 spans 39–107 (IRTYLKKELY…PLSVNIKEEK (69 aa)). The disordered stretch occupies residues 214–241 (AEVKEEQQKEGARRPKRAPKRENSGKAE). Basic and acidic residues predominate over residues 215-226 (EVKEEQQKEGAR).

The protein belongs to the universal ribosomal protein uS3 family. Part of the 30S ribosomal subunit. Forms a tight complex with proteins S10 and S14.

Binds the lower part of the 30S subunit head. Binds mRNA in the 70S ribosome, positioning it for translation. The protein is Small ribosomal subunit protein uS3 of Sulfurimonas denitrificans (strain ATCC 33889 / DSM 1251) (Thiomicrospira denitrificans (strain ATCC 33889 / DSM 1251)).